A 253-amino-acid chain; its full sequence is Sulfate transporter CysZ (253 aa).

The next 4 membrane-spanning stretches (helical) occupy residues 31–51 (FVILPLLVNILLMGGAFWWLF), 75–95 (LLWPLAVISVLLVFGYFFSTI), 151–171 (IVLLILYFIPGIGQTVAPVLW), and 222–242 (IPLLNLFIMPVAVCGATAMWV).

The protein belongs to the CysZ family.

The protein resides in the cell inner membrane. In terms of biological role, high affinity, high specificity proton-dependent sulfate transporter, which mediates sulfate uptake. Provides the sulfur source for the cysteine synthesis pathway. This chain is Sulfate transporter CysZ, found in Shigella dysenteriae serotype 1 (strain Sd197).